Reading from the N-terminus, the 71-residue chain is ATP synthase subunit c (71 aa).

A run of 2 helical transmembrane segments spans residues 9–29 and 49–69; these read MIGY…IFAA and LLGF…AFVI.

Belongs to the ATPase C chain family. As to quaternary structure, F-type ATPases have 2 components, F(1) - the catalytic core - and F(0) - the membrane proton channel. F(1) has five subunits: alpha(3), beta(3), gamma(1), delta(1), epsilon(1). F(0) has three main subunits: a(1), b(2) and c(10-14). The alpha and beta chains form an alternating ring which encloses part of the gamma chain. F(1) is attached to F(0) by a central stalk formed by the gamma and epsilon chains, while a peripheral stalk is formed by the delta and b chains.

Its subcellular location is the cell membrane. Its function is as follows. F(1)F(0) ATP synthase produces ATP from ADP in the presence of a proton or sodium gradient. F-type ATPases consist of two structural domains, F(1) containing the extramembraneous catalytic core and F(0) containing the membrane proton channel, linked together by a central stalk and a peripheral stalk. During catalysis, ATP synthesis in the catalytic domain of F(1) is coupled via a rotary mechanism of the central stalk subunits to proton translocation. Functionally, key component of the F(0) channel; it plays a direct role in translocation across the membrane. A homomeric c-ring of between 10-14 subunits forms the central stalk rotor element with the F(1) delta and epsilon subunits. This is ATP synthase subunit c from Micrococcus luteus (strain ATCC 4698 / DSM 20030 / JCM 1464 / CCM 169 / CCUG 5858 / IAM 1056 / NBRC 3333 / NCIMB 9278 / NCTC 2665 / VKM Ac-2230) (Micrococcus lysodeikticus).